Reading from the N-terminus, the 674-residue chain is MATAVSRPCAGRSRDILWRVLGWRIVASIVWSVLFLPICTTVFIIFSRIDLFHPIQWLSDSFSDLYSSYVIFYFLLLSVVIIIISIFNVEFYAVVPSIPCSRLALIGKIIHPQQLMHSFIHAAMGMVMAWCAAVITQGQYSFLVVPCTGTNSFGSPAAQTCLNEYHLFFLLTGAFMGYSYSLLYFVNNMNYLPFPIIQQYKFLRFRRSLLLLVKHSCVESLFLVRNFCILYYFLGYIPKAWISTAMNLHIDEQVHRPLDTVSGLLNLSLLYHVWLCGVFLLTTWYVSWILFKIYATEAHVFPVQPPFAEGSDECLPKVLNSNPPPIIKYLALQDLMLLSQYSPSRRQEVFSLSQPGGHPHNWTAISRECLNLLNGMTQKLILYQEAAATNGRVSSSYPVEPKKLNSPEETAFQTPKSSQMPRPSVPPLVKTSLFSSKLSTPDVVSPFGTPFGSSVMNRMAGIFDVNTCYGSPQSPQLIRRGPRLWTSASDQQMTEFSNPSPSTSISAEGKTMRQPSVIYSWIQNKREQIKNFLSKRVLIMYFFSKHPEASIQAVFSDAQMHIWALEGLSHLVAASFTEDRFGVVQTTLPAILNTLLTLQEAVDKYFKLPHASSKPPRISGSLVDTSYKTLRFAFRASLKTAIYRITTTFGEHLNAVQASAEHQKRLQQFLEFKE.

Topologically, residues 1–24 are cytoplasmic; it reads MATAVSRPCAGRSRDILWRVLGWR. The helical transmembrane segment at 25–45 threads the bilayer; sequence IVASIVWSVLFLPICTTVFII. The Perinuclear space segment spans residues 46 to 68; that stretch reads FSRIDLFHPIQWLSDSFSDLYSS. Residues 69-89 traverse the membrane as a helical segment; the sequence is YVIFYFLLLSVVIIIISIFNV. Over 90 to 114 the chain is Cytoplasmic; sequence EFYAVVPSIPCSRLALIGKIIHPQQ. The helical transmembrane segment at 115 to 135 threads the bilayer; sequence LMHSFIHAAMGMVMAWCAAVI. Residues 136–165 are Perinuclear space-facing; the sequence is TQGQYSFLVVPCTGTNSFGSPAAQTCLNEY. A helical membrane pass occupies residues 166–186; sequence HLFFLLTGAFMGYSYSLLYFV. Topologically, residues 187 to 225 are cytoplasmic; that stretch reads NNMNYLPFPIIQQYKFLRFRRSLLLLVKHSCVESLFLVR. A helical transmembrane segment spans residues 226–246; that stretch reads NFCILYYFLGYIPKAWISTAM. Topologically, residues 247–272 are perinuclear space; the sequence is NLHIDEQVHRPLDTVSGLLNLSLLYH. The chain crosses the membrane as a helical span at residues 273-293; it reads VWLCGVFLLTTWYVSWILFKI. The Cytoplasmic segment spans residues 294–674; that stretch reads YATEAHVFPV…RLQQFLEFKE (381 aa). The disordered stretch occupies residues 394-425; sequence SSSYPVEPKKLNSPEETAFQTPKSSQMPRPSV. At Ser-406 the chain carries Phosphoserine. Positions 407 to 421 are enriched in polar residues; sequence PEETAFQTPKSSQMP. Thr-414 bears the Phosphothreonine mark. Ser-439 is modified (phosphoserine). Thr-440 is modified (phosphothreonine). At Ser-445 the chain carries Phosphoserine. The residue at position 449 (Thr-449) is a Phosphothreonine. 2 positions are modified to phosphoserine: Ser-471 and Ser-474.

Belongs to the NDC1 family. Interacts with the NUP35/NUP53. Interacts with AAAS, anchoring it to the nuclear envelope.

It is found in the nucleus. The protein localises to the nuclear pore complex. Its subcellular location is the nucleus membrane. Functionally, component of the nuclear pore complex (NPC), which plays a key role in de novo assembly and insertion of NPC in the nuclear envelope. Required for NPC and nuclear envelope assembly, possibly by forming a link between the nuclear envelope membrane and soluble nucleoporins, thereby anchoring the NPC in the membrane. This is Nucleoporin NDC1 (NDC1) from Homo sapiens (Human).